A 155-amino-acid polypeptide reads, in one-letter code: Small ribosomal subunit protein uS7cz/uS7cy (155 aa).

The protein belongs to the universal ribosomal protein uS7 family. Part of the 30S ribosomal subunit.

It is found in the plastid. The protein resides in the chloroplast. In terms of biological role, one of the primary rRNA binding proteins, it binds directly to 16S rRNA where it nucleates assembly of the head domain of the 30S subunit. This is Small ribosomal subunit protein uS7cz/uS7cy (rps7-A) from Oenothera argillicola (Appalachian evening primrose).